We begin with the raw amino-acid sequence, 976 residues long: 3-hydroxy-3-methylglutaryl-coenzyme A reductase (976 aa).

Topologically, residues 1-36 (MDHEGCQGQHPQQCCQWVSNAWSEFLDLLKNAETLD) are lumenal. The SSD domain maps to 36–217 (DIVIMLLGYI…FTFYTAILSI (182 aa)). A helical transmembrane segment spans residues 37-57 (IVIMLLGYIAMHLTFVSLFLS). Topologically, residues 58–64 (MRKMGSK) are cytoplasmic. A helical transmembrane segment spans residues 65-85 (FWLGICTLFSSVFAFLFGLVV). Topologically, residues 86-90 (TTKLG) are lumenal. The chain crosses the membrane as a helical span at residues 91 to 111 (VPISVILLSEGLPFLVVTIGF). Over 112-169 (EKNIVLTRAVMSHAIEHRRIQAQNSKSGKRSPDGSTQNMIQYAVQAAIKEKGFEIIRD) the chain is Cytoplasmic. The helical transmembrane segment at 170-190 (YAIEIVILVIGAASGVQGGLQ) threads the bilayer. Residues 191–193 (QFC) are Lumenal-facing. A helical membrane pass occupies residues 194-214 (FLAAWTLFFDFILLFTFYTAI). Topologically, residues 215 to 272 (LSIKLRSTVSSVMSICVWPLRMMASRRVAENVAKGDDELNRVRGDAPLFGRKSSSIPK) are cytoplasmic. A helical transmembrane segment spans residues 273 to 293 (FKVLMILGFIFVNIVNICSIP). At 294 to 401 (FRNPSSMSTI…GGILKSLEDP (108 aa)) the chain is on the lumenal side. A helical membrane pass occupies residues 402-422 (VLSKWIVIALALSVALNGYLF). Over 423 to 976 (NVARWGIKDP…RYSEVKAIDE (554 aa)) the chain is Cytoplasmic. Glu618 (charge relay system) is an active-site residue. 624–630 (SASRGCK) provides a ligand contact to CoA. NADP(+)-binding positions include 685 to 687 (SRF) and 712 to 720 (DAMGMNMIS). Catalysis depends on Lys752, which acts as the Charge relay system. 781 to 783 (VLK) is a CoA binding site. Residue Asp828 is the Charge relay system of the active site. 923–924 (AH) contacts CoA. Residue His924 is the Proton donor of the active site. A disordered region spans residues 926–954 (QHNRSAAPSRSTTPGSSHDARLTGHDQCP). An NADP(+)-binding site is contributed by 928–929 (NR). Polar residues predominate over residues 928–941 (NRSAAPSRSTTPGS). Residues 943–953 (HDARLTGHDQC) show a composition bias toward basic and acidic residues.

The protein belongs to the HMG-CoA reductase family.

The protein resides in the endoplasmic reticulum membrane. The enzyme catalyses (R)-mevalonate + 2 NADP(+) + CoA = (3S)-3-hydroxy-3-methylglutaryl-CoA + 2 NADPH + 2 H(+). It functions in the pathway metabolic intermediate biosynthesis; (R)-mevalonate biosynthesis; (R)-mevalonate from acetyl-CoA: step 3/3. Functionally, HMG-CoA reductase; part of the first module of ergosterol biosynthesis pathway that includes the early steps of the pathway, conserved across all eukaryotes, and which results in the formation of mevalonate from acetyl-coenzyme A (acetyl-CoA). In this module, the cytosolic acetyl-CoA acetyltransferase catalyzes the formation of acetoacetyl-CoA. The hydroxymethylglutaryl-CoA synthase then condenses acetyl-CoA with acetoacetyl-CoA to form HMG-CoA. The rate-limiting step of the early module is the reduction to mevalonate by the 3-hydroxy-3-methylglutaryl-coenzyme A (HMG-CoA) reductase HMGR. The chain is 3-hydroxy-3-methylglutaryl-coenzyme A reductase from Fusarium fujikuroi (Bakanae and foot rot disease fungus).